Here is a 125-residue protein sequence, read N- to C-terminus: Ribosome-binding factor A (125 aa).

Belongs to the RbfA family. Monomer. Binds 30S ribosomal subunits, but not 50S ribosomal subunits or 70S ribosomes.

It localises to the cytoplasm. In terms of biological role, one of several proteins that assist in the late maturation steps of the functional core of the 30S ribosomal subunit. Associates with free 30S ribosomal subunits (but not with 30S subunits that are part of 70S ribosomes or polysomes). Required for efficient processing of 16S rRNA. May interact with the 5'-terminal helix region of 16S rRNA. This chain is Ribosome-binding factor A, found in Paracidovorax citrulli (strain AAC00-1) (Acidovorax citrulli).